The primary structure comprises 327 residues: Methionyl-tRNA formyltransferase (327 aa).

Position 111-114 (111-114 (SLLP)) interacts with (6S)-5,6,7,8-tetrahydrofolate.

It belongs to the Fmt family.

It carries out the reaction L-methionyl-tRNA(fMet) + (6R)-10-formyltetrahydrofolate = N-formyl-L-methionyl-tRNA(fMet) + (6S)-5,6,7,8-tetrahydrofolate + H(+). Attaches a formyl group to the free amino group of methionyl-tRNA(fMet). The formyl group appears to play a dual role in the initiator identity of N-formylmethionyl-tRNA by promoting its recognition by IF2 and preventing the misappropriation of this tRNA by the elongation apparatus. This is Methionyl-tRNA formyltransferase from Synechococcus elongatus (strain ATCC 33912 / PCC 7942 / FACHB-805) (Anacystis nidulans R2).